The sequence spans 405 residues: Acetate kinase (405 aa).

A Mg(2+)-binding site is contributed by Asn-7. Lys-14 serves as a coordination point for ATP. Arg-90 contributes to the substrate binding site. The active-site Proton donor/acceptor is the Asp-147. Residues 207–211 (HLGNG), 282–284 (DMR), and 330–334 (GVGEN) each bind ATP. Residue Glu-383 coordinates Mg(2+).

Belongs to the acetokinase family. In terms of assembly, homodimer. The cofactor is Mg(2+). Mn(2+) is required as a cofactor.

It is found in the cytoplasm. It catalyses the reaction acetate + ATP = acetyl phosphate + ADP. The protein operates within metabolic intermediate biosynthesis; acetyl-CoA biosynthesis; acetyl-CoA from acetate: step 1/2. Catalyzes the formation of acetyl phosphate from acetate and ATP. Can also catalyze the reverse reaction. In Pseudothermotoga lettingae (strain ATCC BAA-301 / DSM 14385 / NBRC 107922 / TMO) (Thermotoga lettingae), this protein is Acetate kinase.